Reading from the N-terminus, the 153-residue chain is Holo-[acyl-carrier-protein] synthase (153 aa).

2 residues coordinate Mg(2+): Asp24 and Glu78.

This sequence belongs to the P-Pant transferase superfamily. AcpS family. The cofactor is Mg(2+).

It localises to the cytoplasm. The catalysed reaction is apo-[ACP] + CoA = holo-[ACP] + adenosine 3',5'-bisphosphate + H(+). Its function is as follows. Transfers the 4'-phosphopantetheine moiety from coenzyme A to a Ser of acyl-carrier-protein. The protein is Holo-[acyl-carrier-protein] synthase of Bordetella parapertussis (strain 12822 / ATCC BAA-587 / NCTC 13253).